The following is a 613-amino-acid chain: Portal protein (613 aa).

Positions 577-613 (ATGGDHGIRQAPSARGDAEPDHAKSKPARDPPPGAGS) are disordered. The span at 592–605 (GDAEPDHAKSKPAR) shows a compositional bias: basic and acidic residues.

This sequence belongs to the herpesviridae portal protein family. In terms of assembly, homododecamerizes. Interacts with terminase subunits TRM1 and TRM3.

It is found in the virion. Its subcellular location is the host nucleus. In terms of biological role, forms a portal in the viral capsid through which viral DNA is translocated during DNA packaging. Assembles as a dodecamer at a single fivefold axe of the T=16 icosahedric capsid. Binds to the molecular motor that translocates the viral DNA, termed terminase. In Homo sapiens (Human), this protein is Portal protein.